We begin with the raw amino-acid sequence, 210 residues long: ATP-dependent Clp protease proteolytic subunit (210 aa).

Serine 106 (nucleophile) is an active-site residue. Histidine 131 is a catalytic residue.

The protein belongs to the peptidase S14 family. In terms of assembly, fourteen ClpP subunits assemble into 2 heptameric rings which stack back to back to give a disk-like structure with a central cavity, resembling the structure of eukaryotic proteasomes.

Its subcellular location is the cytoplasm. It carries out the reaction Hydrolysis of proteins to small peptides in the presence of ATP and magnesium. alpha-casein is the usual test substrate. In the absence of ATP, only oligopeptides shorter than five residues are hydrolyzed (such as succinyl-Leu-Tyr-|-NHMec, and Leu-Tyr-Leu-|-Tyr-Trp, in which cleavage of the -Tyr-|-Leu- and -Tyr-|-Trp bonds also occurs).. Its function is as follows. Cleaves peptides in various proteins in a process that requires ATP hydrolysis. Has a chymotrypsin-like activity. Plays a major role in the degradation of misfolded proteins. This Rhodopseudomonas palustris (strain BisB18) protein is ATP-dependent Clp protease proteolytic subunit.